The primary structure comprises 436 residues: UDP-N-acetylmuramate--L-alanine ligase (436 aa).

Position 111–117 (111–117) interacts with ATP; the sequence is GTHGKTS.

This sequence belongs to the MurCDEF family.

The protein resides in the cytoplasm. It catalyses the reaction UDP-N-acetyl-alpha-D-muramate + L-alanine + ATP = UDP-N-acetyl-alpha-D-muramoyl-L-alanine + ADP + phosphate + H(+). It participates in cell wall biogenesis; peptidoglycan biosynthesis. Functionally, cell wall formation. The polypeptide is UDP-N-acetylmuramate--L-alanine ligase (Pediococcus pentosaceus (strain ATCC 25745 / CCUG 21536 / LMG 10740 / 183-1w)).